A 147-amino-acid polypeptide reads, in one-letter code: Hemoglobin subunit deltaH (147 aa).

Positions Arg3 to His147 constitute a Globin domain. Heme b contacts are provided by His64 and His93.

The protein belongs to the globin family. As to quaternary structure, heterotetramer of two delta chains and two alpha chains. Red blood cells.

This is Hemoglobin subunit deltaH (HBD) from Dendrohyrax dorsalis (Beecroft's tree hyrax).